Here is a 181-residue protein sequence, read N- to C-terminus: Translationally-controlled tumor protein homolog (181 aa).

The TCTP domain occupies 1 to 181 (MLIFKDAFTD…VKEALVEEKQ (181 aa)).

The protein belongs to the TCTP family.

The protein localises to the cytoplasm. Its function is as follows. Involved in calcium binding and microtubule stabilization. The polypeptide is Translationally-controlled tumor protein homolog (Wuchereria bancrofti).